The chain runs to 156 residues: SsrA-binding protein (156 aa).

The protein belongs to the SmpB family.

It is found in the cytoplasm. Its function is as follows. Required for rescue of stalled ribosomes mediated by trans-translation. Binds to transfer-messenger RNA (tmRNA), required for stable association of tmRNA with ribosomes. tmRNA and SmpB together mimic tRNA shape, replacing the anticodon stem-loop with SmpB. tmRNA is encoded by the ssrA gene; the 2 termini fold to resemble tRNA(Ala) and it encodes a 'tag peptide', a short internal open reading frame. During trans-translation Ala-aminoacylated tmRNA acts like a tRNA, entering the A-site of stalled ribosomes, displacing the stalled mRNA. The ribosome then switches to translate the ORF on the tmRNA; the nascent peptide is terminated with the 'tag peptide' encoded by the tmRNA and targeted for degradation. The ribosome is freed to recommence translation, which seems to be the essential function of trans-translation. The protein is SsrA-binding protein of Clostridium beijerinckii (strain ATCC 51743 / NCIMB 8052) (Clostridium acetobutylicum).